The primary structure comprises 168 residues: Small ribosomal subunit protein bS6 (168 aa).

A disordered region spans residues 103 to 168 (RQAIAEEKEK…AAADKSDDNA (66 aa)). Positions 106 to 115 (IAEEKEKKAE) are enriched in basic and acidic residues. Positions 116 to 125 (GQAAADAAPA) are enriched in low complexity.

It belongs to the bacterial ribosomal protein bS6 family.

In terms of biological role, binds together with bS18 to 16S ribosomal RNA. This Desulfosudis oleivorans (strain DSM 6200 / JCM 39069 / Hxd3) (Desulfococcus oleovorans) protein is Small ribosomal subunit protein bS6.